Here is a 248-residue protein sequence, read N- to C-terminus: Triosephosphate isomerase (248 aa).

Asn10 and Lys12 together coordinate substrate. The active-site Electrophile is His95. Residue Glu165 is the Proton acceptor of the active site.

Belongs to the triosephosphate isomerase family. In terms of assembly, homodimer.

The catalysed reaction is D-glyceraldehyde 3-phosphate = dihydroxyacetone phosphate. It participates in carbohydrate biosynthesis; gluconeogenesis. Its pathway is carbohydrate degradation; glycolysis; D-glyceraldehyde 3-phosphate from glycerone phosphate: step 1/1. The chain is Triosephosphate isomerase (TPI1) from Eremothecium gossypii (strain ATCC 10895 / CBS 109.51 / FGSC 9923 / NRRL Y-1056) (Yeast).